The sequence spans 623 residues: Glutathione import ATP-binding protein GsiA (623 aa).

ABC transporter domains follow at residues 15–269 and 325–564; these read VSGL…QTLL and LRSG…RKLM. Residues 49-56 and 357-364 contribute to the ATP site; these read GESGSGKS.

The protein belongs to the ABC transporter superfamily. Glutathione importer (TC 3.A.1.5.11) family. As to quaternary structure, the complex is composed of two ATP-binding proteins (GsiA), two transmembrane proteins (GsiC and GsiD) and a solute-binding protein (GsiB).

It localises to the cell inner membrane. The enzyme catalyses glutathione(out) + ATP + H2O = glutathione(in) + ADP + phosphate + H(+). Its function is as follows. Part of the ABC transporter complex GsiABCD involved in glutathione import. Responsible for energy coupling to the transport system. This chain is Glutathione import ATP-binding protein GsiA, found in Salmonella paratyphi A (strain ATCC 9150 / SARB42).